A 274-amino-acid chain; its full sequence is 16S rRNA (guanine(1405)-N(7))-methyltransferase (274 aa).

Residues Phe64, 102-104 (HVS), Arg108, Ala133, Asp156, 182-183 (DL), Leu198, and Gln207 each bind S-adenosyl-L-methionine.

Belongs to the methyltransferase superfamily. Aminoglycoside resistance family.

The catalysed reaction is guanosine(1405) in 16S rRNA + S-adenosyl-L-methionine = N(7)-methylguanosine(1405) in 16S rRNA + S-adenosyl-L-homocysteine. Its function is as follows. Specifically methylates the N(7) position of guanine 1405 in 16S rRNA. Confers resistance to various aminoglycosides, including gentamicin and kanamycin. The polypeptide is 16S rRNA (guanine(1405)-N(7))-methyltransferase (grm) (Micromonospora echinospora (Micromonospora purpurea)).